The chain runs to 220 residues: Vesicle-associated membrane protein 7 (220 aa).

The residue at position 2 (alanine 2) is an N-acetylalanine. Residues 2–188 (AILFAVVARG…ARAMCVKNVK (187 aa)) lie on the Cytoplasmic side of the membrane. In terms of domain architecture, Longin spans 7–110 (VVARGTTILA…AMNSEFSSVL (104 aa)). The region spanning 125–185 (RVTETQAQVD…RNLARAMCVK (61 aa)) is the v-SNARE coiled-coil homology domain. Serine 167 and serine 168 each carry phosphoserine. Residues 189–209 (LTAIIVVVSIVFIYIIVSPLC) traverse the membrane as a helical; Anchor for type IV membrane protein segment. The Vesicular segment spans residues 210-220 (GGFTWPSCVKK).

This sequence belongs to the synaptobrevin family. As to quaternary structure, may interact with STX17. Component of the SNARE complex composed of STX4, SNAP23 and VAMP7 that binds SYT7 during lysosomal exocytosis. Component of the SNARE complex composed of STX7, STX8, VAMP7 and VTI1B that is required for heterotypic fusion of late endosomes with lysosomes. Interacts with PICALM. Interacts with RAB21. As to expression, expressed in brain, kidney, liver, lung, spleen and thymus. Not expressed in heart and skeletal muscle.

The protein resides in the cytoplasmic vesicle. Its subcellular location is the secretory vesicle membrane. It localises to the golgi apparatus. The protein localises to the trans-Golgi network membrane. It is found in the late endosome membrane. The protein resides in the lysosome membrane. Its subcellular location is the endoplasmic reticulum membrane. It localises to the phagosome membrane. The protein localises to the synapse. It is found in the synaptosome. In terms of biological role, involved in the targeting and/or fusion of transport vesicles to their target membrane during transport of proteins from the early endosome to the lysosome. Required for heterotypic fusion of late endosomes with lysosomes and homotypic lysosomal fusion. Required for calcium regulated lysosomal exocytosis. Involved in the export of chylomicrons from the endoplasmic reticulum to the cis Golgi. Required for exocytosis of mediators during eosinophil and neutrophil degranulation, and target cell killing by natural killer cells. Required for focal exocytosis of late endocytic vesicles during phagosome formation. The sequence is that of Vesicle-associated membrane protein 7 (Vamp7) from Rattus norvegicus (Rat).